We begin with the raw amino-acid sequence, 193 residues long: Potassium-transporting ATPase KdpC subunit (193 aa).

Residues 14–34 (ITFTFLVLCGLVYPLIVTGIA) form a helical membrane-spanning segment.

This sequence belongs to the KdpC family. As to quaternary structure, the system is composed of three essential subunits: KdpA, KdpB and KdpC.

It localises to the cell membrane. Functionally, part of the high-affinity ATP-driven potassium transport (or Kdp) system, which catalyzes the hydrolysis of ATP coupled with the electrogenic transport of potassium into the cytoplasm. This subunit acts as a catalytic chaperone that increases the ATP-binding affinity of the ATP-hydrolyzing subunit KdpB by the formation of a transient KdpB/KdpC/ATP ternary complex. This Bacillus thuringiensis subsp. konkukian (strain 97-27) protein is Potassium-transporting ATPase KdpC subunit.